Here is a 573-residue protein sequence, read N- to C-terminus: Proline--tRNA ligase (573 aa).

This sequence belongs to the class-II aminoacyl-tRNA synthetase family. ProS type 1 subfamily. As to quaternary structure, homodimer.

It is found in the cytoplasm. The catalysed reaction is tRNA(Pro) + L-proline + ATP = L-prolyl-tRNA(Pro) + AMP + diphosphate. Catalyzes the attachment of proline to tRNA(Pro) in a two-step reaction: proline is first activated by ATP to form Pro-AMP and then transferred to the acceptor end of tRNA(Pro). As ProRS can inadvertently accommodate and process non-cognate amino acids such as alanine and cysteine, to avoid such errors it has two additional distinct editing activities against alanine. One activity is designated as 'pretransfer' editing and involves the tRNA(Pro)-independent hydrolysis of activated Ala-AMP. The other activity is designated 'posttransfer' editing and involves deacylation of mischarged Ala-tRNA(Pro). The misacylated Cys-tRNA(Pro) is not edited by ProRS. The sequence is that of Proline--tRNA ligase from Cupriavidus taiwanensis (strain DSM 17343 / BCRC 17206 / CCUG 44338 / CIP 107171 / LMG 19424 / R1) (Ralstonia taiwanensis (strain LMG 19424)).